A 341-amino-acid chain; its full sequence is UDP-3-O-acylglucosamine N-acyltransferase 2 (341 aa).

His-254 (proton acceptor) is an active-site residue.

The protein belongs to the transferase hexapeptide repeat family. LpxD subfamily. In terms of assembly, homotrimer.

It catalyses the reaction a UDP-3-O-[(3R)-3-hydroxyacyl]-alpha-D-glucosamine + a (3R)-hydroxyacyl-[ACP] = a UDP-2-N,3-O-bis[(3R)-3-hydroxyacyl]-alpha-D-glucosamine + holo-[ACP] + H(+). Its pathway is bacterial outer membrane biogenesis; LPS lipid A biosynthesis. Catalyzes the N-acylation of UDP-3-O-acylglucosamine using 3-hydroxyacyl-ACP as the acyl donor. Is involved in the biosynthesis of lipid A, a phosphorylated glycolipid that anchors the lipopolysaccharide to the outer membrane of the cell. The chain is UDP-3-O-acylglucosamine N-acyltransferase 2 from Nitrobacter winogradskyi (strain ATCC 25391 / DSM 10237 / CIP 104748 / NCIMB 11846 / Nb-255).